The following is a 156-amino-acid chain: Cell division protein SepF (156 aa).

Residues 23–36 show a composition bias toward basic and acidic residues; it reads SYEKEQTDMKKQQD. Residues 23–49 form a disordered region; it reads SYEKEQTDMKKQQDPPEQQDVTFPKAQ.

Belongs to the SepF family. As to quaternary structure, homodimer. Interacts with FtsZ.

The protein localises to the cytoplasm. Cell division protein that is part of the divisome complex and is recruited early to the Z-ring. Probably stimulates Z-ring formation, perhaps through the cross-linking of FtsZ protofilaments. Its function overlaps with FtsA. This chain is Cell division protein SepF, found in Bacillus anthracis (strain CDC 684 / NRRL 3495).